A 323-amino-acid chain; its full sequence is 4-diphosphocytidyl-2-C-methyl-D-erythritol kinase (323 aa).

K25 is an active-site residue. 110-120 (PVAGGMAGGSA) serves as a coordination point for ATP. The active site involves D152.

This sequence belongs to the GHMP kinase family. IspE subfamily.

It carries out the reaction 4-CDP-2-C-methyl-D-erythritol + ATP = 4-CDP-2-C-methyl-D-erythritol 2-phosphate + ADP + H(+). The protein operates within isoprenoid biosynthesis; isopentenyl diphosphate biosynthesis via DXP pathway; isopentenyl diphosphate from 1-deoxy-D-xylulose 5-phosphate: step 3/6. In terms of biological role, catalyzes the phosphorylation of the position 2 hydroxy group of 4-diphosphocytidyl-2C-methyl-D-erythritol. This chain is 4-diphosphocytidyl-2-C-methyl-D-erythritol kinase, found in Mycobacterium leprae (strain Br4923).